We begin with the raw amino-acid sequence, 66 residues long: MGYYKKYKEEYYTVKKTYYKKYYEYDKKDYDCDYDKKYDDYDKKYYDHDKKDYDYVVEYKKHKKHY.

It to B.subtilis protein YnzH.

In Bacillus subtilis (strain 168), this protein is Spore coat protein C (cotC).